The following is a 577-amino-acid chain: MSVTLRFRSREGTFRVAANPDADFLLVLEQLLSKISIEDVQNLYLSDKPNSKGELANGLCGKTVTELGLKNGDMLYASYEAATGSNPDSTTNITTSTNNHNSGSISIGHISIPTTTSGPRKVTQLPVDDVLEKDEGLIKRPLTKFCRHGAKGMCEFCSPLPPWDANYRKENAIKHMSYHAYLKELNELKNSKHNSSSYIAPLEEPNYSILLNCNEGHQPYPKGICSKCQPPPITLQLQKFRMVDHVEFATSSIMNNFIDVWRHTGVQRFGVMYGRYEPFDKVPLGIKAVVEAIYEPPQSGELDGITMLPWENEAEVDAIASELGIYKVGVVFTDLTDSGQKNGTVLCKRHKDSYFLSNLEILMAARNQIQHANITKFSSSGQFSSKFVTCVISGGLNGEIEPRSYQVSTSAEALVRADIITGSTQPSRLYVNSSNDRRYVPDVAYSELNEYGLEVKSNAKPTFPVDFLLVSLTDSFPVNPTPMFDTDSNFVIENRDFFNELQNLHAVSKYLNADTSGKGTSLCNFHFLVYLKRTNILGAQEFDLLLRFVRERQYEDYLHLVESPGWMTLITILEQST.

An MPN domain is found at 246–383 (VEFATSSIMN…ITKFSSSGQF (138 aa)).

Belongs to the NPL4 family.

It localises to the cytoplasm. The protein resides in the perinuclear region. Its subcellular location is the endoplasmic reticulum membrane. The protein localises to the nucleus membrane. Functionally, involved in the import of nuclear-targeted proteins into the nucleus and the export of poly(A) RNA out of the nucleus. Has a role in the endoplasmic reticulum-associated degradation (ERAD) pathway. The chain is Nuclear protein localization protein 4 (NPL4) from Scheffersomyces stipitis (strain ATCC 58785 / CBS 6054 / NBRC 10063 / NRRL Y-11545) (Yeast).